The primary structure comprises 304 residues: Acetyl-coenzyme A carboxylase carboxyl transferase subunit beta (304 aa).

The segment at 16–42 (SSLPPKNSEGGLAYFDEPSPEQESTRK) is disordered. The CoA carboxyltransferase N-terminal domain maps to 48–304 (LWVKCPKCGE…LLRYHQEGAV (257 aa)). Zn(2+)-binding residues include cysteine 52, cysteine 55, cysteine 71, and cysteine 74. The C4-type zinc finger occupies 52–74 (CPKCGEALFNKDLVENQRVCLTC).

The protein belongs to the AccD/PCCB family. Acetyl-CoA carboxylase is a heterohexamer composed of biotin carboxyl carrier protein (AccB), biotin carboxylase (AccC) and two subunits each of ACCase subunit alpha (AccA) and ACCase subunit beta (AccD). The cofactor is Zn(2+).

It localises to the cytoplasm. It catalyses the reaction N(6)-carboxybiotinyl-L-lysyl-[protein] + acetyl-CoA = N(6)-biotinyl-L-lysyl-[protein] + malonyl-CoA. The protein operates within lipid metabolism; malonyl-CoA biosynthesis; malonyl-CoA from acetyl-CoA: step 1/1. Its function is as follows. Component of the acetyl coenzyme A carboxylase (ACC) complex. Biotin carboxylase (BC) catalyzes the carboxylation of biotin on its carrier protein (BCCP) and then the CO(2) group is transferred by the transcarboxylase to acetyl-CoA to form malonyl-CoA. In Desulfitobacterium hafniense (strain Y51), this protein is Acetyl-coenzyme A carboxylase carboxyl transferase subunit beta.